The primary structure comprises 93 residues: Co-chaperonin GroES (93 aa).

The protein belongs to the GroES chaperonin family. As to quaternary structure, heptamer of 7 subunits arranged in a ring. Interacts with the chaperonin GroEL.

It localises to the cytoplasm. Functionally, together with the chaperonin GroEL, plays an essential role in assisting protein folding. The GroEL-GroES system forms a nano-cage that allows encapsulation of the non-native substrate proteins and provides a physical environment optimized to promote and accelerate protein folding. GroES binds to the apical surface of the GroEL ring, thereby capping the opening of the GroEL channel. This chain is Co-chaperonin GroES, found in Lacticaseibacillus paracasei (strain ATCC 334 / BCRC 17002 / CCUG 31169 / CIP 107868 / KCTC 3260 / NRRL B-441) (Lactobacillus paracasei).